Consider the following 432-residue polypeptide: Adenylosuccinate synthetase (432 aa).

Residues 13-19 and 41-43 contribute to the GTP site; these read GDEGKGK and GHT. The active-site Proton acceptor is Asp-14. Mg(2+) is bound by residues Asp-14 and Gly-41. IMP is bound by residues 14–17, 39–42, Thr-130, Arg-144, Gln-225, Thr-240, and Arg-304; these read DEGK and NAGH. His-42 functions as the Proton donor in the catalytic mechanism. 300-306 serves as a coordination point for substrate; sequence ATTGRRR. GTP-binding positions include Arg-306, 332-334, and 415-417; these read KLD and STG.

The protein belongs to the adenylosuccinate synthetase family. Homodimer. The cofactor is Mg(2+).

The protein localises to the cytoplasm. It catalyses the reaction IMP + L-aspartate + GTP = N(6)-(1,2-dicarboxyethyl)-AMP + GDP + phosphate + 2 H(+). It functions in the pathway purine metabolism; AMP biosynthesis via de novo pathway; AMP from IMP: step 1/2. Its function is as follows. Plays an important role in the de novo pathway of purine nucleotide biosynthesis. Catalyzes the first committed step in the biosynthesis of AMP from IMP. In Shigella sonnei (strain Ss046), this protein is Adenylosuccinate synthetase.